The following is a 679-amino-acid chain: Transmembrane protein 214-B (679 aa).

Residues 1-94 (MASGAPDGKW…KKKPQSGDSV (94 aa)) are disordered. Residues 18 to 30 (KSGERREGERKAL) show a composition bias toward basic and acidic residues. N-linked (GlcNAc...) asparagine glycosylation is found at N70, N298, and N322. A run of 2 helical transmembrane segments spans residues 468–488 (GGFPWWRLIVIAFVFLFGSVL) and 606–626 (LLLHLHQTYLLPAVTYLEAAV).

Belongs to the TMEM214 family. As to quaternary structure, constitutively interacts with CASP4; required for the localization of procaspase 4 to the ER.

Its subcellular location is the endoplasmic reticulum membrane. Critical mediator, in cooperation with CASP4, of endoplasmic reticulum-stress induced apoptosis. Required or the activation of CASP4 following endoplasmic reticulum stress. The polypeptide is Transmembrane protein 214-B (tmem214-b) (Xenopus laevis (African clawed frog)).